The primary structure comprises 119 residues: Acidic phospholipase A2 CM-II (119 aa).

3 residues coordinate Ca(2+): Y25, G27, and G29. H45 is a catalytic residue. D46 provides a ligand contact to Ca(2+). D87 is an active-site residue.

This sequence belongs to the phospholipase A2 family. Group II subfamily. D49 sub-subfamily. Ca(2+) is required as a cofactor. In terms of processing, contains 6 disulfide bonds. Expressed by the venom gland.

Its subcellular location is the secreted. It carries out the reaction a 1,2-diacyl-sn-glycero-3-phosphocholine + H2O = a 1-acyl-sn-glycero-3-phosphocholine + a fatty acid + H(+). Functionally, PLA2 catalyzes the calcium-dependent hydrolysis of the 2-acyl groups in 3-sn-phosphoglycerides. The sequence is that of Acidic phospholipase A2 CM-II from Bitis nasicornis (Rhinoceros adder).